The sequence spans 68 residues: Large ribosomal subunit protein uL29 (68 aa).

The protein belongs to the universal ribosomal protein uL29 family.

The sequence is that of Large ribosomal subunit protein uL29 from Leuconostoc citreum (strain KM20).